Here is a 445-residue protein sequence, read N- to C-terminus: mRNA cleavage and polyadenylation factor CLP1 (445 aa).

Residues E33 and 131-136 (SSGKTS) each bind ATP.

This sequence belongs to the Clp1 family. Clp1 subfamily. Component of a pre-mRNA cleavage factor complex. Interacts directly with PCF11.

It localises to the nucleus. In terms of biological role, required for endonucleolytic cleavage during polyadenylation-dependent pre-mRNA 3'-end formation. In Eremothecium gossypii (strain ATCC 10895 / CBS 109.51 / FGSC 9923 / NRRL Y-1056) (Yeast), this protein is mRNA cleavage and polyadenylation factor CLP1.